The following is a 177-amino-acid chain: uncharacterized protein (177 aa).

This is an uncharacterized protein from Acanthamoeba polyphaga (Amoeba).